The primary structure comprises 562 residues: Arginine--tRNA ligase (562 aa).

The short motif at 129–139 is the 'HIGH' region element; that stretch reads ANPTGPLHVGH.

Belongs to the class-I aminoacyl-tRNA synthetase family. Monomer.

Its subcellular location is the cytoplasm. It carries out the reaction tRNA(Arg) + L-arginine + ATP = L-arginyl-tRNA(Arg) + AMP + diphosphate. The chain is Arginine--tRNA ligase from Xanthomonas campestris pv. campestris (strain B100).